Reading from the N-terminus, the 125-residue chain is UPF0251 protein DSY3441 (125 aa).

The protein belongs to the UPF0251 family.

The protein is UPF0251 protein DSY3441 of Desulfitobacterium hafniense (strain Y51).